The chain runs to 192 residues: FAD-linked sulfhydryl oxidase erv2 (192 aa).

Residues 1–8 (MILNRRIQ) are Cytoplasmic-facing. The chain crosses the membrane as a helical; Signal-anchor span at residues 9–29 (VILPTLLILSFIIWIFHSVMV). The Lumenal segment spans residues 30 to 192 (DKDWRLFMPE…VINEDHDYSG (163 aa)). One can recognise an ERV/ALR sulfhydryl oxidase domain in the interval 61–162 (HDNNTNNLMV…TSCDGFNERY (102 aa)). FAD is bound by residues W74, C138, H141, N145, and Y162. C138 and C155 are joined by a disulfide.

FAD is required as a cofactor.

The protein resides in the endoplasmic reticulum membrane. It localises to the cytoplasm. The protein localises to the nucleus. The catalysed reaction is 2 R'C(R)SH + O2 = R'C(R)S-S(R)CR' + H2O2. In terms of biological role, FAD-dependent sulfhydryl oxidase that catalyzes disulfide bond formation in the endoplasmic reticulum lumen. In Schizosaccharomyces pombe (strain 972 / ATCC 24843) (Fission yeast), this protein is FAD-linked sulfhydryl oxidase erv2 (erv2).